A 345-amino-acid chain; its full sequence is Serpentine receptor class beta-5 (345 aa).

Topologically, residues 1 to 22 (MAEINQTKCDLAFQISYHPIYR) are extracellular. An N-linked (GlcNAc...) asparagine glycan is attached at asparagine 5. Residues 23 to 43 (LAQFWTLSVSLLAVPSLLYFL) traverse the membrane as a helical segment. Over 44–57 (LKRVLLLPFHGNLK) the chain is Cytoplasmic. The chain crosses the membrane as a helical span at residues 58–78 (CLLITYFSSIFLYALVLCFDF). At 79-103 (SYQCLIPFIVTTKCSLIIDQTLYKC) the chain is on the extracellular side. A helical membrane pass occupies residues 104 to 124 (GHMTSLFFLTTPMLLPFGFSI). Over 125–142 (ERFVAVGMAYKYEKMRTL) the chain is Cytoplasmic. Residues 143 to 163 (LGPILCFILVAPNFVVFYFLF) traverse the membrane as a helical segment. Residues 164–189 (RDEQFTDSFISFLVLPNTPAVQFNNY) are Extracellular-facing. A helical membrane pass occupies residues 190 to 210 (LWFLLYAKIGNFCCNCVLLIF). Topologically, residues 211–241 (HKRFKNTYLKKKTSLSVRYALEEISNSSKFT) are cytoplasmic. A helical membrane pass occupies residues 242–262 (LILTFTHLVFFGAYTIGSILV). Residues 263 to 280 (RTLGESFFGNFLNFYVAR) lie on the Extracellular side of the membrane. A helical transmembrane segment spans residues 281–301 (GVNCAVPTYNLLIAFVGLISL). Residues 302-345 (RQLNSRRHAKILTKVLIRVTGQEGARNYDDIIMQQWNTVSNRTR) are Cytoplasmic-facing.

This sequence belongs to the nematode receptor-like protein srb family. In terms of tissue distribution, expressed throughout the head.

It is found in the cell membrane. It localises to the perikaryon. The protein resides in the cell projection. Its subcellular location is the dendrite. G-protein coupled receptor. Plays a role in the navigational capacity of sperm and promotes the targeting of sperm derived from males to the fertilization site in the uterus of hermaphrodites. The polypeptide is Serpentine receptor class beta-5 (Caenorhabditis elegans).